The sequence spans 264 residues: S-adenosylmethionine decarboxylase proenzyme (264 aa).

Catalysis depends on Ser113, which acts as the Schiff-base intermediate with substrate; via pyruvic acid. Pyruvic acid (Ser); by autocatalysis is present on Ser113. Residue His118 is the Proton acceptor; for processing activity of the active site. The active-site Proton donor; for catalytic activity is Cys141.

Belongs to the prokaryotic AdoMetDC family. Type 2 subfamily. In terms of assembly, heterooctamer of four alpha and four beta chains arranged as a tetramer of alpha/beta heterodimers. Requires pyruvate as cofactor. Post-translationally, is synthesized initially as an inactive proenzyme. Formation of the active enzyme involves a self-maturation process in which the active site pyruvoyl group is generated from an internal serine residue via an autocatalytic post-translational modification. Two non-identical subunits are generated from the proenzyme in this reaction, and the pyruvate is formed at the N-terminus of the alpha chain, which is derived from the carboxyl end of the proenzyme. The post-translation cleavage follows an unusual pathway, termed non-hydrolytic serinolysis, in which the side chain hydroxyl group of the serine supplies its oxygen atom to form the C-terminus of the beta chain, while the remainder of the serine residue undergoes an oxidative deamination to produce ammonia and the pyruvoyl group blocking the N-terminus of the alpha chain.

The enzyme catalyses S-adenosyl-L-methionine + H(+) = S-adenosyl 3-(methylsulfanyl)propylamine + CO2. The protein operates within amine and polyamine biosynthesis; S-adenosylmethioninamine biosynthesis; S-adenosylmethioninamine from S-adenosyl-L-methionine: step 1/1. Catalyzes the decarboxylation of S-adenosylmethionine to S-adenosylmethioninamine (dcAdoMet), the propylamine donor required for the synthesis of the polyamines spermine and spermidine from the diamine putrescine. The chain is S-adenosylmethionine decarboxylase proenzyme from Xanthomonas oryzae pv. oryzae (strain MAFF 311018).